The following is a 178-amino-acid chain: Ribulose bisphosphate carboxylase small subunit, chloroplastic (178 aa).

The N-terminal 54 residues, 1–54 (MASSMISSPAVTTVNRAGAGTVAPFTGLKSMAGFPTRKTNNDIASIASNGGRVQ), are a transit peptide targeting the chloroplast.

Belongs to the RuBisCO small chain family. Heterohexadecamer of 8 large and 8 small subunits.

It is found in the plastid. Its subcellular location is the chloroplast. RuBisCO catalyzes two reactions: the carboxylation of D-ribulose 1,5-bisphosphate, the primary event in carbon dioxide fixation, as well as the oxidative fragmentation of the pentose substrate. Both reactions occur simultaneously and in competition at the same active site. Although the small subunit is not catalytic it is essential for maximal activity. This Glycine tomentella (Woolly glycine) protein is Ribulose bisphosphate carboxylase small subunit, chloroplastic.